The following is a 160-amino-acid chain: Putative antiporter subunit mnhE2 (160 aa).

3 consecutive transmembrane segments (helical) span residues 22-42 (HFKF…IYIL), 55-75 (IWVA…SSIS), and 100-120 (SDWA…STVI).

This sequence belongs to the CPA3 antiporters (TC 2.A.63) subunit E family. In terms of assembly, may form a heterooligomeric complex that consists of seven subunits: mnhA2, mnhB2, mnhC2, mnhD2, mnhE2, mnhF2 and mnhG2.

It is found in the cell membrane. This is Putative antiporter subunit mnhE2 (mnhE2) from Staphylococcus aureus (strain Mu3 / ATCC 700698).